An 85-amino-acid polypeptide reads, in one-letter code: Keratin-associated protein 7-1 (85 aa).

Residues 37 to 82 are 12 X 2 AA repeats of G-[YCGS]; it reads GSPLGYGCNGYSSLGYGFGGSSFSNLGCGYGGSFYRPWGSGSGFGY.

This sequence belongs to the KRTAP type 7 family. As to quaternary structure, interacts with wool keratins. Wool.

In the wool cortex, wool keratin intermediate filaments are embedded in an interfilamentous matrix, consisting of hair keratin-associated proteins (KRTAP), which are essential for the formation of a rigid and resistant wool shaft through their extensive disulfide bond cross-linking with abundant cysteine residues of wool keratins. The matrix proteins include the high-sulfur and high-glycine-tyrosine keratins. This Ovis aries (Sheep) protein is Keratin-associated protein 7-1 (KRTAP7-1).